The following is a 352-amino-acid chain: Sortase SrtE1 (352 aa).

Composition is skewed to basic and acidic residues over residues 1–10 (MTALRPERDS) and 34–45 (RYEESAAGEENR). The tract at residues 1 to 132 (MTALRPERDS…RQARARKPGA (132 aa)) is disordered. The Cytoplasmic segment spans residues 1-139 (MTALRPERDS…PGAAVVASRA (139 aa)). A required for protein stability region spans residues 15 to 79 (DQGSSYGQPY…TGPIGGGPDG (65 aa)). The segment covering 71–82 (GPIGGGPDGGGR) has biased composition (gly residues). A compositionally biased stretch (basic residues) spans 83 to 97 (AARRKAAKRRHGRRG). Residues 140-160 (IGEIFITTGVLMLLFVTYQLW) form a helical membrane-spanning segment. Residues 161-352 (WTNVRAHAQA…SKGKPDALVS (192 aa)) are Extracellular-facing. Residues H251 and C320 contribute to the active site. The active-site Proton donor is R329.

It belongs to the bacterial sortase family. Class E subfamily.

Its subcellular location is the cell membrane. The enzyme catalyses The enzyme catalyzes a cell wall sorting reaction in which a surface protein with a sorting signal containing a LPXTG motif is cleaved between the Thr and Gly residue. The resulting threonine carboxyl end of the protein is covalently attached to a pentaglycine cross-bridge of peptidoglycan.. Transpeptidase that anchors surface proteins to the cell wall. Recognizes both Leu-Ala-x-Thr-Gly and Leu-Pro-x-Thr-Gly, with a preference for the former. Unlike the S.aureus sortase it cleaves not only the Thr-Gly motif but also the Ala-X bond; Ala-Glu and Ala-His bonds are better substrates than the Thr-Gly motif in vitro. Among its possible substrates are the chaplins ChpA, ChpB and ChpC; this enzyme is less important for ChpC attachment than is SrtE2. A double knockout mutant of srtE1 and srtE2 shows a developmental defect in aerial hyphae formation more dramatic than that due to chaplin deletion. The protein is Sortase SrtE1 of Streptomyces coelicolor (strain ATCC BAA-471 / A3(2) / M145).